The sequence spans 286 residues: Polyamine aminopropyltransferase 1 (286 aa).

One can recognise a PABS domain in the interval 1 to 235 (MSDYQETLYQ…GAMTFAWGST (235 aa)). Glutamine 30 is an S-methyl-5'-thioadenosine binding site. 2 residues coordinate spermidine: histidine 61 and aspartate 85. S-methyl-5'-thioadenosine contacts are provided by residues glutamate 105 and 137–138 (DG). Aspartate 155 functions as the Proton acceptor in the catalytic mechanism. 155 to 158 (DSTD) serves as a coordination point for spermidine. Proline 162 provides a ligand contact to S-methyl-5'-thioadenosine.

The protein belongs to the spermidine/spermine synthase family. Homodimer or homotetramer.

Its subcellular location is the cytoplasm. It carries out the reaction S-adenosyl 3-(methylsulfanyl)propylamine + putrescine = S-methyl-5'-thioadenosine + spermidine + H(+). Its pathway is amine and polyamine biosynthesis; spermidine biosynthesis; spermidine from putrescine: step 1/1. Functionally, catalyzes the irreversible transfer of a propylamine group from the amino donor S-adenosylmethioninamine (decarboxy-AdoMet) to putrescine (1,4-diaminobutane) to yield spermidine. This is Polyamine aminopropyltransferase 1 from Pseudomonas aeruginosa (strain ATCC 15692 / DSM 22644 / CIP 104116 / JCM 14847 / LMG 12228 / 1C / PRS 101 / PAO1).